The following is a 194-amino-acid chain: Peptidyl-tRNA hydrolase (194 aa).

Y16 contributes to the tRNA binding site. Residue H21 is the Proton acceptor of the active site. TRNA-binding residues include F67, N69, and N115.

The protein belongs to the PTH family. Monomer.

It is found in the cytoplasm. The enzyme catalyses an N-acyl-L-alpha-aminoacyl-tRNA + H2O = an N-acyl-L-amino acid + a tRNA + H(+). Functionally, hydrolyzes ribosome-free peptidyl-tRNAs (with 1 or more amino acids incorporated), which drop off the ribosome during protein synthesis, or as a result of ribosome stalling. Its function is as follows. Catalyzes the release of premature peptidyl moieties from peptidyl-tRNA molecules trapped in stalled 50S ribosomal subunits, and thus maintains levels of free tRNAs and 50S ribosomes. The sequence is that of Peptidyl-tRNA hydrolase from Shigella boydii serotype 4 (strain Sb227).